A 373-amino-acid chain; its full sequence is 8-amino-7-oxononanoate synthase (373 aa).

Arg16 contributes to the substrate binding site. Residue 93 to 94 (GF) coordinates pyridoxal 5'-phosphate. Residue His118 participates in substrate binding. Residues Ser165, 190 to 193 (DEAH), and 222 to 225 (TFSK) contribute to the pyridoxal 5'-phosphate site. Position 225 is an N6-(pyridoxal phosphate)lysine (Lys225). Thr334 contacts substrate.

Belongs to the class-II pyridoxal-phosphate-dependent aminotransferase family. BioF subfamily. In terms of assembly, homodimer. The cofactor is pyridoxal 5'-phosphate.

It catalyses the reaction 6-carboxyhexanoyl-[ACP] + L-alanine + H(+) = (8S)-8-amino-7-oxononanoate + holo-[ACP] + CO2. It functions in the pathway cofactor biosynthesis; biotin biosynthesis. Catalyzes the decarboxylative condensation of pimeloyl-[acyl-carrier protein] and L-alanine to produce 8-amino-7-oxononanoate (AON), [acyl-carrier protein], and carbon dioxide. This Helicobacter pylori (strain J99 / ATCC 700824) (Campylobacter pylori J99) protein is 8-amino-7-oxononanoate synthase.